The chain runs to 694 residues: Putative L-type lectin-domain containing receptor kinase II.2 (694 aa).

The signal sequence occupies residues 1-24; sequence MAGVLRSLRFWMIICVQVLSLVLA. Residues 25–318 are Extracellular-facing; it reads QDRDEFVYHD…PTSRSKDSKN (294 aa). The tract at residues 27 to 272 is legume-lectin like; it reads RDEFVYHDFS…DQYILGWSFK (246 aa). N-linked (GlcNAc...) asparagine glycosylation is found at Asn-57, Asn-58, Asn-73, Asn-131, Asn-172, Asn-183, Asn-201, Asn-208, Asn-240, and Asn-246. The segment at 283–314 is disordered; sequence SKILDPPNRPPPPSSPPPPPPPPPTPPTSRSK. Residues 289–309 are compositionally biased toward pro residues; it reads PNRPPPPSSPPPPPPPPPTPP. The chain crosses the membrane as a helical span at residues 319-339; that stretch reads IIIICVTVTSIAFLLMLGGFL. The Cytoplasmic segment spans residues 340-694; it reads YLYKKKKYAE…EDVTILFGGR (355 aa). The region spanning 375-650 is the Protein kinase domain; that stretch reads FRENRLLGAG…IQYLEGNATI (276 aa). ATP-binding positions include 381-389 and Lys-403; that span reads LGAGGFGKV. The active-site Proton acceptor is the Asp-500.

The protein in the C-terminal section; belongs to the protein kinase superfamily. Ser/Thr protein kinase family. This sequence in the N-terminal section; belongs to the leguminous lectin family.

It is found in the cell membrane. It catalyses the reaction L-seryl-[protein] + ATP = O-phospho-L-seryl-[protein] + ADP + H(+). The enzyme catalyses L-threonyl-[protein] + ATP = O-phospho-L-threonyl-[protein] + ADP + H(+). The protein is Putative L-type lectin-domain containing receptor kinase II.2 (LECRK22) of Arabidopsis thaliana (Mouse-ear cress).